Consider the following 263-residue polypeptide: Probable ribosomal RNA small subunit methyltransferase A (263 aa).

S-adenosyl-L-methionine-binding residues include Leu-12, Gly-37, Glu-58, Asp-83, and Asn-100.

The protein belongs to the class I-like SAM-binding methyltransferase superfamily. rRNA adenine N(6)-methyltransferase family. RsmA subfamily.

It is found in the cytoplasm. Its function is as follows. Specifically dimethylates two adjacent adenosines in the loop of a conserved hairpin near the 3'-end of 16S rRNA in the 30S particle. May play a critical role in biogenesis of 30S subunits. This is Probable ribosomal RNA small subunit methyltransferase A from Methanococcus maripaludis (strain C7 / ATCC BAA-1331).